The sequence spans 774 residues: Dapper homolog 2 (774 aa).

Residues 67 to 93 are a coiled coil; sequence PEQQLEAALAALQEQLSRLRQQDIGLK. Disordered regions lie at residues 188–225, 295–319, 345–500, and 624–710; these read RPQA…LDRA, TPQR…TIQT, TPAK…EKIK, and CPES…GAQS. A compositionally biased stretch (polar residues) spans 438–452; sequence VQASPSSKAQQTPSA. Over residues 637 to 648 the composition is skewed to low complexity; the sequence is RRAGGPLARGRP. 2 stretches are compositionally biased toward basic and acidic residues: residues 655 to 672 and 686 to 700; these read AYTR…ECDP and SSDH…RESS. Residues 771 to 774 carry the PDZ-binding motif; that stretch reads MTMV.

This sequence belongs to the dapper family. Can form homodimers and heterodimers with DACT1 or DACT3. Interacts with CSNK1D, PKA catalytic subunit, PKC-type kinase, CSNK2B, DVL1, DVL2, DVL3, VANGL1, VANGL2, TGFBR1, CTNNB1, CTNND2, CTNND1, LEF1, TCF7, TCF7L1 and HDAC1.

Its function is as follows. Involved in regulation of intracellular signaling pathways during development. Negatively regulates the Nodal signaling pathway, possibly by promoting the lysosomal degradation of Nodal receptors, such as TGFBR1. May be involved in control of the morphogenetic behavior of kidney ureteric bud cells by keeping cells epithelial and restraining their mesenchymal character. May play an inhibitory role in the re-epithelialization of skin wounds by attenuating TGF-beta signaling. This is Dapper homolog 2 (DACT2) from Homo sapiens (Human).